The following is a 157-amino-acid chain: S-ribosylhomocysteine lyase (157 aa).

Histidine 54, histidine 58, and cysteine 126 together coordinate Fe cation.

Belongs to the LuxS family. In terms of assembly, homodimer. Requires Fe cation as cofactor.

It catalyses the reaction S-(5-deoxy-D-ribos-5-yl)-L-homocysteine = (S)-4,5-dihydroxypentane-2,3-dione + L-homocysteine. Its function is as follows. Involved in the synthesis of autoinducer 2 (AI-2) which is secreted by bacteria and is used to communicate both the cell density and the metabolic potential of the environment. The regulation of gene expression in response to changes in cell density is called quorum sensing. Catalyzes the transformation of S-ribosylhomocysteine (RHC) to homocysteine (HC) and 4,5-dihydroxy-2,3-pentadione (DPD). The protein is S-ribosylhomocysteine lyase of Bacillus anthracis (strain A0248).